The chain runs to 433 residues: Pyrimidine-nucleoside phosphorylase (433 aa).

81-83 (KHS) is a binding site for phosphate. Glycine 88 and threonine 90 together coordinate K(+). Residues threonine 92, 108–110 (KMS), and threonine 120 contribute to the phosphate site. Substrate is bound by residues arginine 168 and lysine 187. Positions 243, 246, and 255 each coordinate K(+).

This sequence belongs to the thymidine/pyrimidine-nucleoside phosphorylase family. In terms of assembly, homodimer. It depends on K(+) as a cofactor.

The enzyme catalyses uridine + phosphate = alpha-D-ribose 1-phosphate + uracil. It carries out the reaction thymidine + phosphate = 2-deoxy-alpha-D-ribose 1-phosphate + thymine. The catalysed reaction is 2'-deoxyuridine + phosphate = 2-deoxy-alpha-D-ribose 1-phosphate + uracil. Functionally, catalyzes phosphorolysis of the pyrimidine nucleosides uridine, thymidine and 2'-deoxyuridine with the formation of the corresponding pyrimidine base and ribose-1-phosphate. The protein is Pyrimidine-nucleoside phosphorylase (pdp) of Staphylococcus haemolyticus (strain JCSC1435).